The primary structure comprises 223 residues: Large ribosomal subunit protein bL25 (223 aa).

This sequence belongs to the bacterial ribosomal protein bL25 family. CTC subfamily. In terms of assembly, part of the 50S ribosomal subunit; part of the 5S rRNA/L5/L18/L25 subcomplex. Contacts the 5S rRNA. Binds to the 5S rRNA independently of L5 and L18.

This is one of the proteins that binds to the 5S RNA in the ribosome where it forms part of the central protuberance. The polypeptide is Large ribosomal subunit protein bL25 (Albidiferax ferrireducens (strain ATCC BAA-621 / DSM 15236 / T118) (Rhodoferax ferrireducens)).